The sequence spans 246 residues: Serine protease 1 (246 aa).

A signal peptide spans 1-15; that stretch reads MKTFIFLALLGATVA. A propeptide spans 16–23 (activation peptide); it reads FPIDDDDK. The 221-residue stretch at 24-244 folds into the Peptidase S1 domain; the sequence is IVGGYTCSRN…YVSWIQQTIA (221 aa). Cystine bridges form between C30-C160, C48-C64, C132-C233, C139-C206, C171-C185, and C196-C220. The active-site Charge relay system is the H63. Residues E75, N77, V80, and E85 each contribute to the Ca(2+) site. Residue D107 is the Charge relay system of the active site. The active-site Charge relay system is the S200.

Belongs to the peptidase S1 family. Interacts with SERPINA1. It depends on Ca(2+) as a cofactor.

The protein localises to the secreted. Its subcellular location is the extracellular space. The catalysed reaction is Preferential cleavage: Arg-|-Xaa, Lys-|-Xaa.. The protein is Serine protease 1 of Canis lupus familiaris (Dog).